A 907-amino-acid polypeptide reads, in one-letter code: Dual serine/threonine and tyrosine protein kinase (907 aa).

The stretch at 373-409 forms a coiled coil; it reads RKKENELYESLMNIANRKQEEMKDMIVETLNTMKEEL. The Protein kinase domain occupies 630–884; sequence PKLGQELGRG…PLLGIVQPML (255 aa). Residues 636-644 and K659 contribute to the ATP site; that span reads LGRGQYGVV. Residue D755 is the Proton acceptor of the active site.

The protein belongs to the protein kinase superfamily. Ser/Thr protein kinase family.

The protein resides in the cytoplasm. Its subcellular location is the cell membrane. It is found in the apical cell membrane. It localises to the basolateral cell membrane. The protein localises to the cell junction. It carries out the reaction L-seryl-[protein] + ATP = O-phospho-L-seryl-[protein] + ADP + H(+). The enzyme catalyses L-threonyl-[protein] + ATP = O-phospho-L-threonyl-[protein] + ADP + H(+). It catalyses the reaction L-tyrosyl-[protein] + ATP = O-phospho-L-tyrosyl-[protein] + ADP + H(+). In terms of biological role, acts as a positive regulator of ERK phosphorylation downstream of fibroblast growth factor-receptor activation. Involved in the regulation of both caspase-dependent apoptosis and caspase-independent cell death. In the skin, it plays a predominant role in suppressing caspase-dependent apoptosis in response to UV stress in a range of dermal cell types. The sequence is that of Dual serine/threonine and tyrosine protein kinase from Macaca mulatta (Rhesus macaque).